The sequence spans 335 residues: Probable cyclin-H (335 aa).

This sequence belongs to the cyclin family. Cyclin C subfamily.

It is found in the nucleus. In terms of biological role, regulates CDK7, the catalytic subunit of the CDK-activating kinase (CAK) enzymatic complex. The chain is Probable cyclin-H (CYCH) from Echinococcus multilocularis (Fox tapeworm).